The sequence spans 185 residues: Ribosome-recycling factor (185 aa).

The protein belongs to the RRF family.

The protein resides in the cytoplasm. Functionally, responsible for the release of ribosomes from messenger RNA at the termination of protein biosynthesis. May increase the efficiency of translation by recycling ribosomes from one round of translation to another. The protein is Ribosome-recycling factor of Geobacter sp. (strain M21).